The sequence spans 381 residues: E3 ubiquitin-protein ligase ATL15 (381 aa).

Positions 1-23 (MVVMSRVSFYSSFLLLLLEVVVA) are cleaved as a signal peptide. The helical transmembrane segment at 40–60 (AIIMIVLVSVFFALGCISVYM) threads the bilayer. The RING-type; atypical zinc finger occupies 118 to 160 (CPVCLNEFEDDETLRLIPQCCHVFHPGCIDAWLRSQTTCPLCR).

This sequence belongs to the RING-type zinc finger family. ATL subfamily.

The protein resides in the membrane. The catalysed reaction is S-ubiquitinyl-[E2 ubiquitin-conjugating enzyme]-L-cysteine + [acceptor protein]-L-lysine = [E2 ubiquitin-conjugating enzyme]-L-cysteine + N(6)-ubiquitinyl-[acceptor protein]-L-lysine.. Its pathway is protein modification; protein ubiquitination. In terms of biological role, E3 ubiquitin-protein ligase able to catalyze polyubiquitination with ubiquitin-conjugating enzyme E2 UBC8, UBC10, UBC11, UBC28 and UBC29 in vitro. In Arabidopsis thaliana (Mouse-ear cress), this protein is E3 ubiquitin-protein ligase ATL15 (ATL15).